A 604-amino-acid chain; its full sequence is Sulfite reductase [NADPH] flavoprotein alpha-component (604 aa).

Residues 65–203 (VTILYGSQTG…AAGQWHADVL (139 aa)) form the Flavodoxin-like domain. FMN-binding positions include 71 to 76 (SQTGNG), 118 to 121 (STHG), and 154 to 163 (LGDSSYEFFC). An FAD-binding FR-type domain is found at 236–453 (QNPYSAEVLV…VEPNKHFRLP (218 aa)). FAD is bound by residues Thr324, Leu358, 392-395 (RLYS), 410-412 (TVA), and 425-428 (GGAS). NADP(+)-binding positions include 524–525 (SR), 530–534 (KIYVQ), and Asp566. Tyr604 contacts FAD.

It belongs to the NADPH-dependent sulphite reductase flavoprotein subunit CysJ family. This sequence in the N-terminal section; belongs to the flavodoxin family. The protein in the C-terminal section; belongs to the flavoprotein pyridine nucleotide cytochrome reductase family. As to quaternary structure, alpha(8)-beta(8). The alpha component is a flavoprotein, the beta component is a hemoprotein. Requires FAD as cofactor. FMN is required as a cofactor.

The enzyme catalyses hydrogen sulfide + 3 NADP(+) + 3 H2O = sulfite + 3 NADPH + 4 H(+). The protein operates within sulfur metabolism; hydrogen sulfide biosynthesis; hydrogen sulfide from sulfite (NADPH route): step 1/1. Component of the sulfite reductase complex that catalyzes the 6-electron reduction of sulfite to sulfide. This is one of several activities required for the biosynthesis of L-cysteine from sulfate. The flavoprotein component catalyzes the electron flow from NADPH -&gt; FAD -&gt; FMN to the hemoprotein component. The chain is Sulfite reductase [NADPH] flavoprotein alpha-component from Shewanella sp. (strain ANA-3).